A 366-amino-acid polypeptide reads, in one-letter code: MREETPEQPAPLRSGYTTGSCATATSLAAARLLLGGTISDAVQIVLPKGQQVLMRLEFCRAWENGAEAGTLKDAGDDPDVTHGALVFARVRLSAEPGVRFHAGPGVGTVTRPGLTLAVGEPAINPVPRQMIERHLAQLAAERGYAGGFEVAIGVEGGAELALKTMNPRLGILGGLSILGTSGIVRPFSCSAYIASIHQGIDVARANGVRHIAACTGNASEDAMRRRYALPEIALIEMGDFAGAVLKHLRRAPVEKLSLCGGFGKISKLAGGHLDLHSRHSSIDLPQLAGWAAALGASTALQDSMRAANTSQQALAQAHAEGVALGDAVCAHALRFARGIVPTEVALEVFAIDRQGNLVGQACEERR.

It belongs to the CbiD family.

The catalysed reaction is Co-precorrin-5B + S-adenosyl-L-methionine = Co-precorrin-6A + S-adenosyl-L-homocysteine. It participates in cofactor biosynthesis; adenosylcobalamin biosynthesis; cob(II)yrinate a,c-diamide from sirohydrochlorin (anaerobic route): step 6/10. In terms of biological role, catalyzes the methylation of C-1 in cobalt-precorrin-5B to form cobalt-precorrin-6A. In Pseudomonas aeruginosa (strain LESB58), this protein is Cobalt-precorrin-5B C(1)-methyltransferase.